Reading from the N-terminus, the 191-residue chain is MDRKTRGRASKVDLLPENVRKTLHEMLRDKAIPQARILEEINALIEDAGLPDEMKLSRSGLNRYATNVEQVGHNLRQMREMTSALTAELGDKPMGETTKLILEMARSQLFKAMMRQIENPESDVDIDLLKNAMLAAQRLESTAMSSHRREKEIRQAFAEEAANAVSEELRGQDGISEELEQRIRDVLLGKA.

It belongs to the mulikevirus small terminase family. In terms of assembly, heterodimer with the terminase large subunit gp28; the active complex is probably heterooligomeric.

It is found in the host cytoplasm. In terms of biological role, the terminase small subunit binds to the packaging initiation site (pac) and regulates the ATPase activity of the terminase large subunit. The terminase lies at a unique vertex of the procapsid and is composed of two subunits, a small terminase subunit involved in viral DNA recognition (packaging sequence), and a large terminase subunit possessing endonucleolytic and ATPase activities. Both terminase subunits heterooligomerize and are docked on the portal protein to form the packaging machine. The terminase large subunit exhibits endonuclease activity and cleaves the viral genome concatemer once the capsid is full (headful packaging). Once the capsid is packaged with the DNA, the terminase complex is substituted by neck proteins. In Enterobacteriaceae (Bacteriophage Mu), this protein is Probable terminase, small subunit gp27.